The sequence spans 75 residues: Pi-hexatoxin-Hi1a (75 aa).

6 disulfides stabilise this stretch: cysteine 3/cysteine 18, cysteine 10/cysteine 23, cysteine 17/cysteine 33, cysteine 40/cysteine 55, cysteine 47/cysteine 60, and cysteine 54/cysteine 71. Domain repeat units follow at residues 3–33 (CIRKWLSCVDRKNDCCEGLECYKRRHSFEVC) and 40–71 (CLVKWKQCDGRERDCCAGLECWKRSGNKSSVC). Residues 3 to 71 (CIRKWLSCVD…KRSGNKSSVC (69 aa)) form a 2 X approximate repeats with cysteine pattern C-C-CC-C-C region.

This sequence belongs to the psalmotoxin-1 family. Double-knot toxin subfamily. As to expression, expressed by the venom gland.

It localises to the secreted. This toxin potently and selectively inhibits ASIC1a (IC(50)=0.4 nM on rASIC1a and IC(50)=0.52 nM on hASIC1a), an isoform of the gene ASIC1. It incompletely inhibits ASIC1a activation in a pH-independent and slowly reversible manner (Tau(off)=14.2 minutes for rASIC1a and 31.8 minutes for hASIC1a). This toxin acts by binding to and stabilizing the closed state of the channel, thereby impeding the transition into a conducting state. This toxin may bind to the acidic pocket of ASIC1a, since mutation of a key residue of this pocket (Arg-350) abolishes the ability of the toxin to inhibit ASIC1a. In addition, it shows antiparasitic activities, since it moderately inhibits the larval development of the major pathogenic nematode of ruminants (H.contortus, IC(50)=22.9 uM). In vivo, this toxin protects the brain from neuronal injury when administered up to 8 hours after stroke onset. The polypeptide is Pi-hexatoxin-Hi1a (Hadronyche infensa (Fraser island funnel-web spider)).